We begin with the raw amino-acid sequence, 480 residues long: uncharacterized protein (480 aa).

N6-(pyridoxal phosphate)lysine is present on K222.

The protein belongs to the Orn/Lys/Arg decarboxylase class-I family. It depends on pyridoxal 5'-phosphate as a cofactor.

This is an uncharacterized protein from Bacillus subtilis (strain 168).